The chain runs to 583 residues: Laccase-21 (583 aa).

The first 29 residues, 1–29, serve as a signal peptide directing secretion; the sequence is MGIAKIPAVLWLLACAVLTFAVAISPAHG. Plastocyanin-like domains are found at residues 39-155 and 165-323; these read FITE…PKHG and KEIP…YYTG. N85 is a glycosylation site (N-linked (GlcNAc...) asparagine). Cu cation is bound by residues H89, H91, H134, and H136. N282, N311, N384, N387, N399, N409, and N446 each carry an N-linked (GlcNAc...) asparagine glycan. In terms of domain architecture, Plastocyanin-like 3 spans 436–567; the sequence is FPNNPAPVFV…NTVFIVKDGK (132 aa). Cu cation contacts are provided by H484, H487, H489, H546, C547, H548, H552, and M557.

It belongs to the multicopper oxidase family. Cu cation serves as cofactor.

The protein resides in the secreted. Its subcellular location is the extracellular space. It is found in the apoplast. It catalyses the reaction 4 hydroquinone + O2 = 4 benzosemiquinone + 2 H2O. In terms of biological role, lignin degradation and detoxification of lignin-derived products. The protein is Laccase-21 (LAC21) of Oryza sativa subsp. japonica (Rice).